Reading from the N-terminus, the 423-residue chain is Isovaleryl-CoA dehydrogenase, mitochondrial (423 aa).

A mitochondrion-targeting transit peptide spans M1–A29. N6-acetyllysine; alternate is present on residues K55, K64, and K75. N6-succinyllysine; alternate is present on residues K55, K64, and K75. FAD is bound by residues L162–S171 and W195–T197. S171 provides a ligand contact to substrate. Residue S219–R220 coordinates substrate. Residue K238 is modified to N6-acetyllysine. An N6-acetyllysine; alternate modification is found at K259. K259 carries the N6-succinyllysine; alternate modification. Substrate-binding positions include Y274 and D281–R284. The active-site Proton acceptor is E283. Residue R309 coordinates FAD. K315 carries the post-translational modification N6-succinyllysine. Residues Q320 and Q377–G381 each bind FAD. A404–G405 lines the substrate pocket. T406 to E408 contributes to the FAD binding site.

It belongs to the acyl-CoA dehydrogenase family. As to quaternary structure, homotetramer. FAD serves as cofactor.

It is found in the mitochondrion matrix. It carries out the reaction 3-methylbutanoyl-CoA + oxidized [electron-transfer flavoprotein] + H(+) = 3-methylbut-2-enoyl-CoA + reduced [electron-transfer flavoprotein]. The catalysed reaction is pentanoyl-CoA + oxidized [electron-transfer flavoprotein] + H(+) = (2E)-pentenoyl-CoA + reduced [electron-transfer flavoprotein]. It catalyses the reaction hexanoyl-CoA + oxidized [electron-transfer flavoprotein] + H(+) = (2E)-hexenoyl-CoA + reduced [electron-transfer flavoprotein]. The enzyme catalyses butanoyl-CoA + oxidized [electron-transfer flavoprotein] + H(+) = (2E)-butenoyl-CoA + reduced [electron-transfer flavoprotein]. It functions in the pathway amino-acid degradation; L-leucine degradation; (S)-3-hydroxy-3-methylglutaryl-CoA from 3-isovaleryl-CoA: step 1/3. Its function is as follows. Catalyzes the conversion of isovaleryl-CoA/3-methylbutanoyl-CoA to 3-methylbut-2-enoyl-CoA as an intermediate step in the leucine (Leu) catabolic pathway. To a lesser extent, is also able to catalyze the oxidation of other saturated short-chain acyl-CoA thioesters as pentanoyl-CoA, hexenoyl-CoA and butenoyl-CoA. This is Isovaleryl-CoA dehydrogenase, mitochondrial (IVD) from Pongo abelii (Sumatran orangutan).